Reading from the N-terminus, the 246-residue chain is Small ribosomal subunit protein uS2 (246 aa).

The disordered stretch occupies residues 224–246 (AKQGEEEAEAAEETAPETETTTA). Residues 229 to 239 (EEAEAAEETAP) show a composition bias toward acidic residues.

This sequence belongs to the universal ribosomal protein uS2 family.

The protein is Small ribosomal subunit protein uS2 of Bacillus velezensis (strain DSM 23117 / BGSC 10A6 / LMG 26770 / FZB42) (Bacillus amyloliquefaciens subsp. plantarum).